Reading from the N-terminus, the 1249-residue chain is MAGE-like protein 2 (1249 aa).

Positions 1–10 (MSQLSKNLGD) are enriched in polar residues. Disordered stretches follow at residues 1–50 (MSQL…PPID), 134–233 (APGA…AQPP), 300–327 (QPPA…QPMA), 349–378 (PQVP…WQAT), 410–433 (RQGP…VRQA), 515–569 (QALP…LPAP), 647–679 (QPFQ…EVPT), 714–746 (LMTP…RAPS), 862–910 (PQAT…DWQG), and 930–957 (VSGD…ILSG). Pro residues-rich tracts occupy residues 40-49 (PPVPWDPPPI) and 140-233 (AHPP…AQPP). Residues 301 to 311 (PPASGAPMAQP) are compositionally biased toward low complexity. 2 stretches are compositionally biased toward pro residues: residues 312–324 (AAPP…PPAQ) and 349–358 (PQVPQGPQAP). Positions 369–378 (QATSPGWQAT) are enriched in polar residues. Over residues 410 to 432 (RQGPPPIRPGPPPIRPGPPPVRQ) the composition is skewed to pro residues. Positions 525-552 (QAPQARLPAPQVQAAPQVPTAPPATQVP) are enriched in low complexity. The span at 553-567 (AAPPAGPQVPQPVLP) shows a compositional bias: pro residues. The segment covering 662 to 675 (QLPPQQAQASGPQA) has biased composition (low complexity). The span at 725–746 (SIDRRGSSKERRTSSKERRAPS) shows a compositional bias: basic and acidic residues. The segment covering 862-871 (PQATATTQEA) has biased composition (low complexity). Basic residues predominate over residues 881–891 (RSGKATRKKKH). Residues 1020-1219 (LDERANALVQ…QSWPFHYLEA (200 aa)) form the MAGE domain. The span at 1226–1235 (EDTDEDEPDT) shows a compositional bias: acidic residues. The tract at residues 1226–1249 (EDTDEDEPDTGDSAHGPTSRPPPR) is disordered.

As to quaternary structure, part of a complex consisting of MAGEL2, TRIM27 and USP7; directly interacts with USP7. Interacts with TRIM27. Interacts with VPS35; leading to recruitment at retromer-containing endosomes. Interacts with BMAL1 and PER2. Expressed in placenta, fetal and adult brain. Not detected in heart and small intestine, very low levels in fibroblasts. Not expressed in brain of a Prader-Willi patient.

The protein localises to the early endosome. It localises to the cytoplasm. The protein resides in the nucleus. Its function is as follows. Probably enhances ubiquitin ligase activity of RING-type zinc finger-containing E3 ubiquitin-protein ligases, possibly through recruitment and/or stabilization of the Ubl-conjugating enzyme (E2) at the E3:substrate complex. Acts as a regulator of retrograde transport via its interaction with VPS35. Recruited to retromer-containing endosomes and promotes the formation of 'Lys-63'-linked polyubiquitin chains at 'Lys-220' of WASHC1 together with TRIM27, leading to promote endosomal F-actin assembly. Regulates the circadian clock by repressing the transcriptional activator activity of the CLOCK-BMAL1 heterodimer. Significantly promotes the cytoplasmic accumulation of CLOCK. The protein is MAGE-like protein 2 (MAGEL2) of Homo sapiens (Human).